The primary structure comprises 398 residues: 1-deoxy-D-xylulose 5-phosphate reductoisomerase (398 aa).

NADPH-binding residues include threonine 10, glycine 11, serine 12, valine 13, glycine 36, lysine 37, asparagine 38, and asparagine 124. Lysine 125 contributes to the 1-deoxy-D-xylulose 5-phosphate binding site. Glutamate 126 contacts NADPH. Aspartate 150 is a Mn(2+) binding site. The 1-deoxy-D-xylulose 5-phosphate site is built by serine 151, glutamate 152, serine 186, and histidine 209. Glutamate 152 contributes to the Mn(2+) binding site. Glycine 215 lines the NADPH pocket. The 1-deoxy-D-xylulose 5-phosphate site is built by serine 222, asparagine 227, lysine 228, and glutamate 231. Glutamate 231 contributes to the Mn(2+) binding site.

This sequence belongs to the DXR family. As to quaternary structure, homodimer. The cofactor is Mg(2+). Requires Mn(2+) as cofactor.

It catalyses the reaction 2-C-methyl-D-erythritol 4-phosphate + NADP(+) = 1-deoxy-D-xylulose 5-phosphate + NADPH + H(+). The protein operates within isoprenoid biosynthesis; isopentenyl diphosphate biosynthesis via DXP pathway; isopentenyl diphosphate from 1-deoxy-D-xylulose 5-phosphate: step 1/6. Its function is as follows. Catalyzes the NADPH-dependent rearrangement and reduction of 1-deoxy-D-xylulose-5-phosphate (DXP) to 2-C-methyl-D-erythritol 4-phosphate (MEP). The protein is 1-deoxy-D-xylulose 5-phosphate reductoisomerase of Photorhabdus laumondii subsp. laumondii (strain DSM 15139 / CIP 105565 / TT01) (Photorhabdus luminescens subsp. laumondii).